The sequence spans 183 residues: Ubiquitin carboxyl-terminal hydrolase 17-like protein 23 (183 aa).

The USP domain occupies alanine 80–valine 183.

It belongs to the peptidase C19 family. USP17 subfamily.

It localises to the nucleus. The protein localises to the endoplasmic reticulum. The chain is Ubiquitin carboxyl-terminal hydrolase 17-like protein 23 (USP17L23) from Homo sapiens (Human).